Here is a 298-residue protein sequence, read N- to C-terminus: Aspartate carbamoyltransferase catalytic subunit (298 aa).

2 residues coordinate carbamoyl phosphate: Arg-54 and Thr-55. Residue Lys-82 coordinates L-aspartate. Carbamoyl phosphate-binding residues include Arg-104, His-132, and Gln-135. L-aspartate-binding residues include Arg-165 and Arg-218. 2 residues coordinate carbamoyl phosphate: Gly-260 and Pro-261.

Belongs to the aspartate/ornithine carbamoyltransferase superfamily. ATCase family. Heterododecamer (2C3:3R2) of six catalytic PyrB chains organized as two trimers (C3), and six regulatory PyrI chains organized as three dimers (R2).

The enzyme catalyses carbamoyl phosphate + L-aspartate = N-carbamoyl-L-aspartate + phosphate + H(+). The protein operates within pyrimidine metabolism; UMP biosynthesis via de novo pathway; (S)-dihydroorotate from bicarbonate: step 2/3. In terms of biological role, catalyzes the condensation of carbamoyl phosphate and aspartate to form carbamoyl aspartate and inorganic phosphate, the committed step in the de novo pyrimidine nucleotide biosynthesis pathway. This Wolbachia sp. subsp. Brugia malayi (strain TRS) protein is Aspartate carbamoyltransferase catalytic subunit.